Here is a 236-residue protein sequence, read N- to C-terminus: (5-formylfuran-3-yl)methyl phosphate synthase (236 aa).

Lysine 27 functions as the Schiff-base intermediate with substrate in the catalytic mechanism. Lysine 85 functions as the Proton acceptor in the catalytic mechanism.

Belongs to the MfnB family.

It carries out the reaction 2 D-glyceraldehyde 3-phosphate = 4-(hydroxymethyl)-2-furancarboxaldehyde phosphate + phosphate + 2 H2O. It participates in cofactor biosynthesis; methanofuran biosynthesis. In terms of biological role, catalyzes the formation of 4-(hydroxymethyl)-2-furancarboxaldehyde phosphate (4-HFC-P) from two molecules of glyceraldehyde-3-P (GA-3-P). The chain is (5-formylfuran-3-yl)methyl phosphate synthase from Methanothermobacter thermautotrophicus (strain ATCC 29096 / DSM 1053 / JCM 10044 / NBRC 100330 / Delta H) (Methanobacterium thermoautotrophicum).